Reading from the N-terminus, the 376-residue chain is Actin, macronuclear (376 aa).

This sequence belongs to the actin family.

It localises to the cytoplasm. The protein resides in the cytoskeleton. The catalysed reaction is ATP + H2O = ADP + phosphate + H(+). Actins are highly conserved proteins that are involved in various types of cell motility and are ubiquitously expressed in all eukaryotic cells. The sequence is that of Actin, macronuclear from Tetrahymena thermophila.